A 132-amino-acid chain; its full sequence is MALTLDIVTPEKRVLSVQVDEVRAPGVQGGFGVRLNHEPFMTALEPGRLTYVEGGREHHYAVGGGFLQVADNRVIVLADTAEAAGEIDVDRARKAFEDAQNRLLQLTEQDEGHSAESARVRRAAARLTVAGR.

Belongs to the ATPase epsilon chain family. F-type ATPases have 2 components, CF(1) - the catalytic core - and CF(0) - the membrane proton channel. CF(1) has five subunits: alpha(3), beta(3), gamma(1), delta(1), epsilon(1). CF(0) has three main subunits: a, b and c.

It is found in the cell inner membrane. Its function is as follows. Produces ATP from ADP in the presence of a proton gradient across the membrane. This is ATP synthase epsilon chain from Anaeromyxobacter dehalogenans (strain 2CP-C).